Consider the following 907-residue polypeptide: Polyphosphoinositide phosphatase (907 aa).

In terms of domain architecture, SAC spans 154–547 (FQNVDLSSNF…GDTLSLQYGG (394 aa)). Residues 707-788 (GIDPSPFTVR…VKMTDAGDSA (82 aa)) are disordered. The span at 758-770 (SEDDSGTDREEEG) shows a compositional bias: acidic residues.

Component of the PI(3,5)P2 regulatory complex/PAS complex, at least composed of PIKFYVE, FIG4 and VAC14. VAC14 nucleates the assembly of the complex and serves as a scaffold by pentamerizing into a star-shaped structure, which can bind a single copy each of PIKFYVE and FIG4 and coordinates their activities.

It is found in the endosome membrane. The catalysed reaction is a 1,2-diacyl-sn-glycero-3-phospho-(1D-myo-inositol-3,5-bisphosphate) + H2O = a 1,2-diacyl-sn-glycero-3-phospho-(1D-myo-inositol-3-phosphate) + phosphate. The enzyme catalyses a 1,2-diacyl-sn-glycero-3-phospho-(1D-myo-inositol-4,5-bisphosphate) + H2O = a 1,2-diacyl-sn-glycero-3-phospho-(1D-myo-inositol 4-phosphate) + phosphate. It carries out the reaction a 1,2-diacyl-sn-glycero-3-phospho-(1D-myo-inositol-3,4,5-trisphosphate) + H2O = a 1,2-diacyl-sn-glycero-3-phospho-(1D-myo-inositol-3,4-bisphosphate) + phosphate. It catalyses the reaction O-phospho-L-seryl-[protein] + H2O = L-seryl-[protein] + phosphate. Its function is as follows. Dual specificity phosphatase component of the PI(3,5)P2 regulatory complex which regulates both the synthesis and turnover of phosphatidylinositol 3,5-bisphosphate (PtdIns(3,5)P2). Catalyzes the dephosphorylation of phosphatidylinositol 3,5-bisphosphate (PtdIns(3,5)P2) to form phosphatidylinositol 3-phosphate. Has serine-protein phosphatase activity acting on PIKfyve to stimulate its lipid kinase activity, its catalytically activity being required for maximal PI(3,5)P2 production. In vitro, hydrolyzes all three D5-phosphorylated polyphosphoinositide and although displaying preferences for PtdIns(3,5)P2, it is capable of hydrolyzing PtdIns(3,4,5)P3 and PtdIns(4,5)P2, at least in vitro. This chain is Polyphosphoinositide phosphatase, found in Homo sapiens (Human).